The following is a 195-amino-acid chain: Probable GTP-binding protein EngB (195 aa).

Residues aspartate 24–isoleucine 195 form the EngB-type G domain. GTP is bound by residues glycine 32–serine 39, glycine 59–leucine 63, aspartate 77–glycine 80, threonine 144–aspartate 147, and phenylalanine 176–serine 178. Residues serine 39 and threonine 61 each contribute to the Mg(2+) site.

The protein belongs to the TRAFAC class TrmE-Era-EngA-EngB-Septin-like GTPase superfamily. EngB GTPase family. Mg(2+) serves as cofactor.

In terms of biological role, necessary for normal cell division and for the maintenance of normal septation. The polypeptide is Probable GTP-binding protein EngB (Streptococcus sanguinis (strain SK36)).